A 190-amino-acid chain; its full sequence is Large ribosomal subunit protein bL25 (190 aa).

It belongs to the bacterial ribosomal protein bL25 family. CTC subfamily. Part of the 50S ribosomal subunit; part of the 5S rRNA/L5/L18/L25 subcomplex. Contacts the 5S rRNA. Binds to the 5S rRNA independently of L5 and L18.

This is one of the proteins that binds to the 5S RNA in the ribosome where it forms part of the central protuberance. The protein is Large ribosomal subunit protein bL25 of Neisseria meningitidis serogroup A / serotype 4A (strain DSM 15465 / Z2491).